Here is a 75-residue protein sequence, read N- to C-terminus: UPF0352 protein YejL (75 aa).

Belongs to the UPF0352 family.

The polypeptide is UPF0352 protein YejL (Shigella flexneri).